The sequence spans 542 residues: Chaperonin GroEL (542 aa).

Residues 29-32 (TMGP), Lys50, 86-90 (DGTTT), Gly414, 477-479 (NAA), and Asp493 each bind ATP.

This sequence belongs to the chaperonin (HSP60) family. Forms a cylinder of 14 subunits composed of two heptameric rings stacked back-to-back. Interacts with the co-chaperonin GroES.

The protein resides in the cytoplasm. The enzyme catalyses ATP + H2O + a folded polypeptide = ADP + phosphate + an unfolded polypeptide.. Functionally, together with its co-chaperonin GroES, plays an essential role in assisting protein folding. The GroEL-GroES system forms a nano-cage that allows encapsulation of the non-native substrate proteins and provides a physical environment optimized to promote and accelerate protein folding. This chain is Chaperonin GroEL, found in Sulfurimonas denitrificans (strain ATCC 33889 / DSM 1251) (Thiomicrospira denitrificans (strain ATCC 33889 / DSM 1251)).